An 86-amino-acid polypeptide reads, in one-letter code: Large ribosomal subunit protein uL23 (86 aa).

It belongs to the universal ribosomal protein uL23 family. Part of the 50S ribosomal subunit. Contacts protein L29.

Functionally, binds to 23S rRNA. One of the proteins that surrounds the polypeptide exit tunnel on the outside of the ribosome. This Pyrococcus abyssi (strain GE5 / Orsay) protein is Large ribosomal subunit protein uL23.